Reading from the N-terminus, the 238-residue chain is 1-(5-phosphoribosyl)-5-[(5-phosphoribosylamino)methylideneamino] imidazole-4-carboxamide isomerase (238 aa).

The active-site Proton acceptor is the Asp-8. The active-site Proton donor is the Asp-129.

The protein belongs to the HisA/HisF family.

The protein resides in the cytoplasm. The enzyme catalyses 1-(5-phospho-beta-D-ribosyl)-5-[(5-phospho-beta-D-ribosylamino)methylideneamino]imidazole-4-carboxamide = 5-[(5-phospho-1-deoxy-D-ribulos-1-ylimino)methylamino]-1-(5-phospho-beta-D-ribosyl)imidazole-4-carboxamide. Its pathway is amino-acid biosynthesis; L-histidine biosynthesis; L-histidine from 5-phospho-alpha-D-ribose 1-diphosphate: step 4/9. The chain is 1-(5-phosphoribosyl)-5-[(5-phosphoribosylamino)methylideneamino] imidazole-4-carboxamide isomerase from Anaeromyxobacter dehalogenans (strain 2CP-1 / ATCC BAA-258).